Consider the following 591-residue polypeptide: Serine/threonine-protein kinase PAK 4 (591 aa).

In terms of domain architecture, CRIB spans 11–24 (ISAPSNFEHRVHTG). The linker stretch occupies residues 25-320 (FDQHEQKFTG…VVDPGDPRSY (296 aa)). At serine 41 the chain carries Phosphoserine. Position 78 is an N6-methyllysine (lysine 78). A disordered region spans residues 95–301 (TRSNSLRRDS…PQREPQRVSH (207 aa)). Residues serine 104 and serine 148 each carry the phosphoserine modification. Residues 149 to 164 (GDRRRAGPEKRPKSSR) are compositionally biased toward basic and acidic residues. Phosphoserine is present on residues serine 167 and serine 181. Position 187 is a phosphothreonine (threonine 187). The span at 191 to 202 (AGLASGAKLAAG) shows a compositional bias: low complexity. Serine 195 bears the Phosphoserine mark. The residue at position 207 (threonine 207) is a Phosphothreonine. Positions 242–260 (SSSSSSRPPTRARGAPSPG) are enriched in low complexity. Phosphoserine occurs at positions 258 and 267. A compositionally biased stretch (pro residues) spans 271 to 290 (LAPPACTPAAPAVPGPPGPR). At serine 291 the chain carries Phosphoserine. The span at 292 to 301 (PQREPQRVSH) shows a compositional bias: basic and acidic residues. The tract at residues 298 to 323 (RVSHEQFRAALQLVVDPGDPRSYLDN) is GEF-interaction domain (GID). A Protein kinase domain is found at 321–572 (LDNFIKIGEG…AAELLKHPFL (252 aa)). Residues 327–335 (IGEGSTGIV), lysine 350, and 396–398 (EFL) contribute to the ATP site. The active-site Proton acceptor is the aspartate 440. Residue 458 to 460 (DFG) participates in ATP binding. Serine 474 is modified (phosphoserine; by autocatalysis).

It belongs to the protein kinase superfamily. STE Ser/Thr protein kinase family. STE20 subfamily. Interacts with FGFR2 and GRB2. Interacts tightly with GTP-bound but not GDP-bound CDC42/p21 and weakly with RAC1. Interacts with INKA1. Interacts with SH3RF2. Interacts with RHOU and PAXI; the PAK4-RHOU complex protects RHOU from ubiquitination and acts as a scaffold to suppport paxillin/PAXI phosphorylation. Post-translationally, autophosphorylated on serine residues when activated by CDC42/p21. Phosphorylated on tyrosine residues upon stimulation of FGFR2. Methylated by SETD6. Polyubiquitinated, leading to its proteasomal degradation. As to expression, highest expression in prostate, testis and colon.

The protein localises to the cytoplasm. The catalysed reaction is L-seryl-[protein] + ATP = O-phospho-L-seryl-[protein] + ADP + H(+). It carries out the reaction L-threonyl-[protein] + ATP = O-phospho-L-threonyl-[protein] + ADP + H(+). Its activity is regulated as follows. Inhibited by INKA1; which inhibits the serine/threonine-protein kinase activity by binding PAK4 in a substrate-like manner. Functionally, serine/threonine-protein kinase that plays a role in a variety of different signaling pathways including cytoskeleton regulation, cell adhesion turnover, cell migration, growth, proliferation or cell survival. Activation by various effectors including growth factor receptors or active CDC42 and RAC1 results in a conformational change and a subsequent autophosphorylation on several serine and/or threonine residues. Phosphorylates and inactivates the protein phosphatase SSH1, leading to increased inhibitory phosphorylation of the actin binding/depolymerizing factor cofilin. Decreased cofilin activity may lead to stabilization of actin filaments. Phosphorylates LIMK1, a kinase that also inhibits the activity of cofilin. Phosphorylates integrin beta5/ITGB5 and thus regulates cell motility. Phosphorylates ARHGEF2 and activates the downstream target RHOA that plays a role in the regulation of assembly of focal adhesions and actin stress fibers. Stimulates cell survival by phosphorylating the BCL2 antagonist of cell death BAD. Alternatively, inhibits apoptosis by preventing caspase-8 binding to death domain receptors in a kinase independent manner. Plays a role in cell-cycle progression by controlling levels of the cell-cycle regulatory protein CDKN1A and by phosphorylating RAN. Promotes kinase-independent stabilization of RHOU, thereby contributing to focal adhesion disassembly during cell migration. The protein is Serine/threonine-protein kinase PAK 4 of Homo sapiens (Human).